The sequence spans 519 residues: NADH-quinone oxidoreductase subunit N (519 aa).

The next 13 membrane-spanning stretches (helical) occupy residues 14 to 34 (LLPAIIMVVGASILLLSEVFL), 44 to 64 (AVLTVVTAVAAGAMALTTMFE), 82 to 102 (FLTFVVCVGLGLATLSSVSFL), 117 to 137 (LFASAGMSLLAMSNELITLFV), 167 to 187 (FILGAFSSAVLLYGAALLYGA), 209 to 229 (GLVYAGIILVITGFAFKVAAV), 249 to 269 (LMSVGVKAAAFAAMVRVFFMV), 278 to 298 (LLGLFSVLAFLTMVAGNLLAI), 307 to 327 (LAYSSIAHAGYLLVGVAALFV), 359 to 379 (ILYYLLAYTFSAVGAFAIVSV), 407 to 427 (WAFAMAAFMLSLGGIPPTIGF), 431 to 451 (LLIFQAAVDAGLIGLTIVGVL), and 487 to 507 (LALVLSTAAVVILGIIPGPIM).

The protein belongs to the complex I subunit 2 family. In terms of assembly, NDH-1 is composed of 14 different subunits. Subunits NuoA, H, J, K, L, M, N constitute the membrane sector of the complex.

It localises to the cell inner membrane. The catalysed reaction is a quinone + NADH + 5 H(+)(in) = a quinol + NAD(+) + 4 H(+)(out). In terms of biological role, NDH-1 shuttles electrons from NADH, via FMN and iron-sulfur (Fe-S) centers, to quinones in the respiratory chain. The immediate electron acceptor for the enzyme in this species is believed to be ubiquinone. Couples the redox reaction to proton translocation (for every two electrons transferred, four hydrogen ions are translocated across the cytoplasmic membrane), and thus conserves the redox energy in a proton gradient. The polypeptide is NADH-quinone oxidoreductase subunit N (Myxococcus xanthus (strain DK1622)).